Consider the following 228-residue polypeptide: 7-cyano-7-deazaguanine synthase (228 aa).

10–20 (FSGGQDSTTLA) is a binding site for ATP. Positions 190, 205, 208, and 211 each coordinate Zn(2+).

Belongs to the QueC family. It depends on Zn(2+) as a cofactor.

It carries out the reaction 7-carboxy-7-deazaguanine + NH4(+) + ATP = 7-cyano-7-deazaguanine + ADP + phosphate + H2O + H(+). Its pathway is purine metabolism; 7-cyano-7-deazaguanine biosynthesis. In terms of biological role, catalyzes the ATP-dependent conversion of 7-carboxy-7-deazaguanine (CDG) to 7-cyano-7-deazaguanine (preQ(0)). The polypeptide is 7-cyano-7-deazaguanine synthase (Helicobacter pylori (strain P12)).